We begin with the raw amino-acid sequence, 278 residues long: 4-deoxy-L-threo-5-hexosulose-uronate ketol-isomerase (278 aa).

Zn(2+) contacts are provided by H196, H198, E203, and H245.

It belongs to the KduI family. Zn(2+) serves as cofactor.

The catalysed reaction is 5-dehydro-4-deoxy-D-glucuronate = 3-deoxy-D-glycero-2,5-hexodiulosonate. Its pathway is glycan metabolism; pectin degradation; 2-dehydro-3-deoxy-D-gluconate from pectin: step 4/5. Catalyzes the isomerization of 5-dehydro-4-deoxy-D-glucuronate to 3-deoxy-D-glycero-2,5-hexodiulosonate. This chain is 4-deoxy-L-threo-5-hexosulose-uronate ketol-isomerase, found in Salmonella heidelberg (strain SL476).